A 375-amino-acid chain; its full sequence is Probable G-protein coupled receptor 34 (375 aa).

Topologically, residues 1–54 (MTTTSVDSWLCSSHGMHFITNYSDQASQNFSGVPNVTSCPMDEKLLSTVLTTFY) are extracellular. Asn-21, Asn-29, and Asn-35 each carry an N-linked (GlcNAc...) asparagine glycan. The helical transmembrane segment at 55–75 (SVIFLVGLVGNIIALYVFLGI) threads the bilayer. Residues 76–81 (HRKRNS) lie on the Cytoplasmic side of the membrane. Residues 82–102 (IQIYLLNVAVADLLLIFCLPF) traverse the membrane as a helical segment. Residues 103–121 (RIMYHINQNKWTLGVILCK) lie on the Extracellular side of the membrane. A disulfide bridge connects residues Cys-120 and Cys-197. Residues 122–142 (VVGTLFYMNMYISIILLGFIS) traverse the membrane as a helical segment. The Cytoplasmic portion of the chain corresponds to 143 to 164 (LDRYIKINRSIQQRRAITTKQS). A helical transmembrane segment spans residues 165 to 185 (IYVCCIVWTVALAGFLTMIIL). Over 186–209 (TLKKGGHNSTMCFHYRDRHNAKGE) the chain is Extracellular. Residue Asn-193 is glycosylated (N-linked (GlcNAc...) asparagine). Residues 210–230 (AIFNFVLVVMFWLIFLLIILS) traverse the membrane as a helical segment. Residues 231–262 (YIKIGKNLLRISKRRSKFPNSGKYATTARNSF) are Cytoplasmic-facing. A helical membrane pass occupies residues 263 to 283 (IVLIIFTICFVPYHAFRFIYI). At 284-303 (SSQLNVSSCYWKEIIHKTNE) the chain is on the extracellular side. Asn-288 carries an N-linked (GlcNAc...) asparagine glycan. Residues 304–324 (IMLVFSSFNSCLDPVMYFLMS) form a helical membrane-spanning segment. The Cytoplasmic portion of the chain corresponds to 325–375 (SNIRKIMCQLLFRRFQSEASRSESTSEFKPGHSLHDLSVTVKMPQYSTKGN).

Belongs to the G-protein coupled receptor 1 family. Highly expressed in glial cells such as astrocytes and microglia.

The protein localises to the cell membrane. Functionally, G-protein-coupled receptor of lysophosphatidylserine (LysoPS) that plays different roles in immune response. Acts a damage-sensing receptor that triggers tissue repair upon recognition of dying neutrophils. Mechanistically, apoptotic neutrophils release lysophosphatydilserine that are recognized by type 3 innate lymphoid cells (ILC3s) via GPR34, which activates downstream PI3K-AKT and RAS-ERK signaling pathways leading to STAT3 activation and IL-22 production. Plays an important role in microglial function, controlling morphology and phagocytosis. This Mus musculus (Mouse) protein is Probable G-protein coupled receptor 34 (Gpr34).